A 302-amino-acid chain; its full sequence is 4-diphosphocytidyl-2-C-methyl-D-erythritol kinase (302 aa).

Residue Lys-27 is part of the active site. Residue 110 to 120 (PMGGGVGGGSS) coordinates ATP. Residue Asp-152 is part of the active site.

Belongs to the GHMP kinase family. IspE subfamily.

The enzyme catalyses 4-CDP-2-C-methyl-D-erythritol + ATP = 4-CDP-2-C-methyl-D-erythritol 2-phosphate + ADP + H(+). Its pathway is isoprenoid biosynthesis; isopentenyl diphosphate biosynthesis via DXP pathway; isopentenyl diphosphate from 1-deoxy-D-xylulose 5-phosphate: step 3/6. In terms of biological role, catalyzes the phosphorylation of the position 2 hydroxy group of 4-diphosphocytidyl-2C-methyl-D-erythritol. The chain is 4-diphosphocytidyl-2-C-methyl-D-erythritol kinase from Mannheimia succiniciproducens (strain KCTC 0769BP / MBEL55E).